Reading from the N-terminus, the 688-residue chain is Glycine--tRNA ligase beta subunit (688 aa).

The protein belongs to the class-II aminoacyl-tRNA synthetase family. Tetramer of two alpha and two beta subunits.

Its subcellular location is the cytoplasm. The catalysed reaction is tRNA(Gly) + glycine + ATP = glycyl-tRNA(Gly) + AMP + diphosphate. This is Glycine--tRNA ligase beta subunit from Desulforudis audaxviator (strain MP104C).